We begin with the raw amino-acid sequence, 113 residues long: uncharacterized protein (113 aa).

This is an uncharacterized protein from Haemophilus influenzae (strain ATCC 51907 / DSM 11121 / KW20 / Rd).